Consider the following 341-residue polypeptide: Uroporphyrinogen decarboxylase (341 aa).

Residues 23-27, Phe42, Asp73, Tyr148, Ser203, and His318 contribute to the substrate site; that span reads RQAGR.

This sequence belongs to the uroporphyrinogen decarboxylase family. Homodimer.

It localises to the cytoplasm. It carries out the reaction uroporphyrinogen III + 4 H(+) = coproporphyrinogen III + 4 CO2. It participates in porphyrin-containing compound metabolism; protoporphyrin-IX biosynthesis; coproporphyrinogen-III from 5-aminolevulinate: step 4/4. Functionally, catalyzes the decarboxylation of four acetate groups of uroporphyrinogen-III to yield coproporphyrinogen-III. This chain is Uroporphyrinogen decarboxylase, found in Brucella melitensis biotype 1 (strain ATCC 23456 / CCUG 17765 / NCTC 10094 / 16M).